We begin with the raw amino-acid sequence, 402 residues long: 1-deoxy-D-xylulose 5-phosphate reductoisomerase (402 aa).

6 residues coordinate NADPH: T10, G11, S12, I13, N38, and N124. K125 provides a ligand contact to 1-deoxy-D-xylulose 5-phosphate. E126 serves as a coordination point for NADPH. D150 serves as a coordination point for Mn(2+). 1-deoxy-D-xylulose 5-phosphate is bound by residues S151, E152, S186, and H209. E152 is a binding site for Mn(2+). G215 is an NADPH binding site. The 1-deoxy-D-xylulose 5-phosphate site is built by S222, N227, K228, and E231. E231 serves as a coordination point for Mn(2+).

It belongs to the DXR family. Requires Mg(2+) as cofactor. Mn(2+) serves as cofactor.

The catalysed reaction is 2-C-methyl-D-erythritol 4-phosphate + NADP(+) = 1-deoxy-D-xylulose 5-phosphate + NADPH + H(+). The protein operates within isoprenoid biosynthesis; isopentenyl diphosphate biosynthesis via DXP pathway; isopentenyl diphosphate from 1-deoxy-D-xylulose 5-phosphate: step 1/6. Functionally, catalyzes the NADPH-dependent rearrangement and reduction of 1-deoxy-D-xylulose-5-phosphate (DXP) to 2-C-methyl-D-erythritol 4-phosphate (MEP). This Vibrio vulnificus (strain CMCP6) protein is 1-deoxy-D-xylulose 5-phosphate reductoisomerase.